The sequence spans 563 residues: Arginine--tRNA ligase (563 aa).

Positions 121–131 (PNIAKPFSIGH) match the 'HIGH' region motif.

The protein belongs to the class-I aminoacyl-tRNA synthetase family. In terms of assembly, monomer.

It localises to the cytoplasm. The enzyme catalyses tRNA(Arg) + L-arginine + ATP = L-arginyl-tRNA(Arg) + AMP + diphosphate. The chain is Arginine--tRNA ligase (argS) from Streptococcus pneumoniae serotype 4 (strain ATCC BAA-334 / TIGR4).